The following is a 324-amino-acid chain: NADH-quinone oxidoreductase subunit H (324 aa).

8 helical membrane-spanning segments follow: residues 11–31 (ILITVGKAIVILLVVVTCGAF), 81–101 (VIFTLAPMIAFTSMLIAFAIV), 114–134 (IGILFFLMMAGLAVYAVLFAG), 154–174 (VSYEVFIGLSLMGVVAQAGSF), 186–206 (LWNVIPQFFGFITFAIAGVAV), 237–257 (FFVGEYIGIVTVSALMVTLFF), 264–284 (ILPPFVWFALKTGFFMMMFIL), and 304–324 (VCLPITLLNLLATAAVILYNA).

This sequence belongs to the complex I subunit 1 family. NDH-1 is composed of 13 different subunits. Subunits NuoA, H, J, K, L, M, N constitute the membrane sector of the complex.

Its subcellular location is the cell inner membrane. The catalysed reaction is a quinone + NADH + 5 H(+)(in) = a quinol + NAD(+) + 4 H(+)(out). Functionally, NDH-1 shuttles electrons from NADH, via FMN and iron-sulfur (Fe-S) centers, to quinones in the respiratory chain. The immediate electron acceptor for the enzyme in this species is believed to be ubiquinone. Couples the redox reaction to proton translocation (for every two electrons transferred, four hydrogen ions are translocated across the cytoplasmic membrane), and thus conserves the redox energy in a proton gradient. This subunit may bind ubiquinone. In Pectobacterium carotovorum subsp. carotovorum (strain PC1), this protein is NADH-quinone oxidoreductase subunit H.